The primary structure comprises 125 residues: Phosphoribosyl-AMP cyclohydrolase (125 aa).

Aspartate 74 is a Mg(2+) binding site. Cysteine 75 is a binding site for Zn(2+). Mg(2+) is bound by residues aspartate 76 and aspartate 78. Positions 92 and 99 each coordinate Zn(2+).

This sequence belongs to the PRA-CH family. As to quaternary structure, homodimer. The cofactor is Mg(2+). It depends on Zn(2+) as a cofactor.

It is found in the cytoplasm. The catalysed reaction is 1-(5-phospho-beta-D-ribosyl)-5'-AMP + H2O = 1-(5-phospho-beta-D-ribosyl)-5-[(5-phospho-beta-D-ribosylamino)methylideneamino]imidazole-4-carboxamide. It participates in amino-acid biosynthesis; L-histidine biosynthesis; L-histidine from 5-phospho-alpha-D-ribose 1-diphosphate: step 3/9. Catalyzes the hydrolysis of the adenine ring of phosphoribosyl-AMP. The chain is Phosphoribosyl-AMP cyclohydrolase from Syntrophotalea carbinolica (strain DSM 2380 / NBRC 103641 / GraBd1) (Pelobacter carbinolicus).